Consider the following 621-residue polypeptide: C4-dicarboxylate transport sensor protein DctB (621 aa).

Residues methionine 1–serine 26 lie on the Cytoplasmic side of the membrane. Residues tryptophan 27 to alanine 45 traverse the membrane as a helical segment. Topologically, residues arginine 46–glutamine 320 are periplasmic. Residues leucine 321–leucine 338 traverse the membrane as a helical segment. The Cytoplasmic segment spans residues arginine 339–alanine 621. In terms of domain architecture, Histidine kinase spans glycine 412–alanine 621. At histidine 415 the chain carries Phosphohistidine; by autocatalysis.

Autophosphorylated.

The protein resides in the cell inner membrane. It catalyses the reaction ATP + protein L-histidine = ADP + protein N-phospho-L-histidine.. In terms of biological role, member of the two-component regulatory system DctB/DctD involved in the transport of C4-dicarboxylates. DctB functions as a membrane-associated protein kinase that phosphorylates DctD in response to environmental signals. The chain is C4-dicarboxylate transport sensor protein DctB (dctB) from Rhizobium meliloti (strain 1021) (Ensifer meliloti).